The primary structure comprises 331 residues: Ornithine carbamoyltransferase, catabolic (331 aa).

Carbamoyl phosphate-binding positions include 57-60, Q82, R106, and 133-136; these read STRT and HPTQ. Residues N166, D230, and 234–235 contribute to the L-ornithine site; that span reads SM. Carbamoyl phosphate contacts are provided by residues 272–273 and R317; that span reads CL.

This sequence belongs to the aspartate/ornithine carbamoyltransferase superfamily. OTCase family.

The protein resides in the cytoplasm. It catalyses the reaction carbamoyl phosphate + L-ornithine = L-citrulline + phosphate + H(+). The protein operates within amino-acid degradation; L-arginine degradation via ADI pathway; carbamoyl phosphate from L-arginine: step 2/2. Functionally, reversibly catalyzes the transfer of the carbamoyl group from carbamoyl phosphate (CP) to the N(epsilon) atom of ornithine (ORN) to produce L-citrulline. The chain is Ornithine carbamoyltransferase, catabolic (arcB) from Clostridium perfringens (strain ATCC 13124 / DSM 756 / JCM 1290 / NCIMB 6125 / NCTC 8237 / Type A).